Consider the following 153-residue polypeptide: Large ribosomal subunit protein uL15 (153 aa).

The segment at 15 to 42 (ARRIVGRGSSSGRGTTSGRGTKGQQARA) is disordered. Gly residues predominate over residues 23-35 (SSSGRGTTSGRGT).

This sequence belongs to the universal ribosomal protein uL15 family. In terms of assembly, part of the 50S ribosomal subunit.

Its function is as follows. Binds to the 23S rRNA. The polypeptide is Large ribosomal subunit protein uL15 (Treponema pallidum (strain Nichols)).